We begin with the raw amino-acid sequence, 268 residues long: 4-hydroxy-tetrahydrodipicolinate reductase (268 aa).

NAD(+) is bound by residues 7-12 and Glu-33; that span reads GAGGRM. NADP(+) is bound at residue Arg-34. Residues 97-99 and 121-124 contribute to the NAD(+) site; these read GTT and SGNM. Catalysis depends on His-155, which acts as the Proton donor/acceptor. His-156 provides a ligand contact to (S)-2,3,4,5-tetrahydrodipicolinate. The active-site Proton donor is the Lys-159. (S)-2,3,4,5-tetrahydrodipicolinate is bound at residue 165–166; sequence GT.

Belongs to the DapB family.

Its subcellular location is the cytoplasm. The catalysed reaction is (S)-2,3,4,5-tetrahydrodipicolinate + NAD(+) + H2O = (2S,4S)-4-hydroxy-2,3,4,5-tetrahydrodipicolinate + NADH + H(+). It catalyses the reaction (S)-2,3,4,5-tetrahydrodipicolinate + NADP(+) + H2O = (2S,4S)-4-hydroxy-2,3,4,5-tetrahydrodipicolinate + NADPH + H(+). The protein operates within amino-acid biosynthesis; L-lysine biosynthesis via DAP pathway; (S)-tetrahydrodipicolinate from L-aspartate: step 4/4. Functionally, catalyzes the conversion of 4-hydroxy-tetrahydrodipicolinate (HTPA) to tetrahydrodipicolinate. The chain is 4-hydroxy-tetrahydrodipicolinate reductase from Brucella melitensis biotype 1 (strain ATCC 23456 / CCUG 17765 / NCTC 10094 / 16M).